Here is a 714-residue protein sequence, read N- to C-terminus: Calpain-1 catalytic subunit (714 aa).

Residues 55 to 354 (LFRDEAFPPV…FTRLEICNLT (300 aa)) enclose the Calpain catalytic domain. Ca(2+)-binding residues include Gln109 and Asp114. Residues Cys115, His272, and Asn296 contribute to the active site. Ca(2+) is bound by residues Asp318 and Asp323. Phosphothreonine is present on Thr354. The segment at 355 to 526 (PDALKSQRVR…KKAGTQELDD (172 aa)) is domain III. The linker stretch occupies residues 527–542 (QVQAILPDEQVLSEEE). A domain IV region spans residues 543–713 (IDENFKALFR…LFKWLQLTMF (171 aa)). EF-hand domains follow at residues 585–618 (FSLE…NRIR), 615–650 (NRIR…AGFK), and 680–714 (VRLE…TMFA). Asp598, Asp600, Asn602, Lys604, Glu609, Asp628, Asp630, Ser632, Ser634, and Glu639 together coordinate Ca(2+).

It belongs to the peptidase C2 family. In terms of assembly, forms a heterodimer with a small (regulatory) subunit CAPNS1. Requires Ca(2+) as cofactor. Post-translationally, undergoes calcium-induced successive autoproteolytic cleavages that generate a membrane-bound 78 kDa active form and an intracellular 75 kDa active form. Calpastatin reduces with high efficiency the transition from 78 kDa to 75 kDa calpain forms.

It localises to the cytoplasm. It is found in the cell membrane. The enzyme catalyses Broad endopeptidase specificity.. Activated by micromolar concentrations of calcium and inhibited by calpastatin. Its function is as follows. Calcium-regulated non-lysosomal thiol-protease which catalyzes limited proteolysis of substrates involved in cytoskeletal remodeling and signal transduction. Proteolytically cleaves CTBP1. Cleaves and activates caspase-7 (CASP7). This chain is Calpain-1 catalytic subunit, found in Sus scrofa (Pig).